Reading from the N-terminus, the 790-residue chain is Nuclear cap-binding protein subunit 1 (790 aa).

The segment at 1–26 (MSRRRHSYENDGGQPHKRRKTSDANE) is disordered. Residues 3 to 20 (RRRHSYENDGGQPHKRRK) carry the Nuclear localization signal motif. At S7 the chain carries Phosphoserine. T21 is modified (phosphothreonine). Phosphoserine is present on residues S22 and S201. The MIF4G domain occupies 28-240 (EDHLESLICK…CLWAQIQKLK (213 aa)). K204 bears the N6-acetyllysine mark. A coiled-coil region spans residues 643 to 713 (STIRKMNKHV…SEQKNLFLVI (71 aa)). The segment at 666-685 (LARQHKRRSDDDDRSSDRKD) is disordered. K684 is covalently cross-linked (Glycyl lysine isopeptide (Lys-Gly) (interchain with G-Cter in SUMO2)). K698 bears the N6-acetyllysine mark.

It belongs to the NCBP1 family. Component of the nuclear cap-binding complex (CBC), a heterodimer composed of NCBP1/CBP80 and NCBP2/CBP20 that interacts with m7GpppG-capped RNA. Found in a U snRNA export complex containing PHAX/RNUXA, NCBP1/CBP80, NCBP2/CBP20, RAN, XPO1 and m7G-capped RNA. Identified in a IGF2BP1-dependent mRNP granule complex containing untranslated mRNAs. Interacts with PHAX/RNUXA, SRRT/ARS2, EIF4G2, IGF2BP1, HNRNPF, HNRNPH1, KIAA0427/CTIF, PARN, DROSHA, UPF1 and ALYREF/THOC4. May interact with EIF4G1; the interaction is however controversial. The large PER complex involved in the repression of transcriptional termination is composed of at least PER2, CDK9, DDX5, DHX9, NCBP1/CBP80 and POLR2A (active). Component of an alternative nuclear cap-binding complex (CBC) composed of NCBP1/CBP80 and NCBP3. Interacts with METTL3. Interacts with ZFC3H1 in a RNase-insensitive manner. Interacts with MTREX. Interacts with TASOR. Interacts with DHX34; the interaction is RNA-dependent. Interacts with KPNA3. Dephosphorylated at Thr-21 by the PNUTS-PP1 complex during RNA polymerase II transcription pause-release. In terms of tissue distribution, expressed in the spermatogonia, spermatocytes and granular cells within the cerebellum.

It localises to the nucleus. It is found in the cytoplasm. Functionally, component of the cap-binding complex (CBC), which binds cotranscriptionally to the 5'-cap of pre-mRNAs and is involved in various processes such as pre-mRNA splicing, translation regulation, nonsense-mediated mRNA decay, RNA-mediated gene silencing (RNAi) by microRNAs (miRNAs) and mRNA export. The CBC complex is involved in mRNA export from the nucleus via its interaction with ALYREF/THOC4/ALY, leading to the recruitment of the mRNA export machinery to the 5'-end of mRNA and to mRNA export in a 5' to 3' direction through the nuclear pore. The CBC complex is also involved in mediating U snRNA and intronless mRNAs export from the nucleus. The CBC complex is essential for a pioneer round of mRNA translation, before steady state translation when the CBC complex is replaced by cytoplasmic cap-binding protein eIF4E. The pioneer round of mRNA translation mediated by the CBC complex plays a central role in nonsense-mediated mRNA decay (NMD), NMD only taking place in mRNAs bound to the CBC complex, but not on eIF4E-bound mRNAs. The CBC complex enhances NMD in mRNAs containing at least one exon-junction complex (EJC) via its interaction with UPF1, promoting the interaction between UPF1 and UPF2. The CBC complex is also involved in 'failsafe' NMD, which is independent of the EJC complex, while it does not participate in Staufen-mediated mRNA decay (SMD). During cell proliferation, the CBC complex is also involved in microRNAs (miRNAs) biogenesis via its interaction with SRRT/ARS2 and is required for miRNA-mediated RNA interference. The CBC complex also acts as a negative regulator of PARN, thereby acting as an inhibitor of mRNA deadenylation. In the CBC complex, NCBP1/CBP80 does not bind directly capped RNAs (m7GpppG-capped RNA) but is required to stabilize the movement of the N-terminal loop of NCBP2/CBP20 and lock the CBC into a high affinity cap-binding state with the cap structure. Associates with NCBP3 to form an alternative cap-binding complex (CBC) which plays a key role in mRNA export and is particularly important in cellular stress situations such as virus infections. The conventional CBC with NCBP2 binds both small nuclear RNA (snRNA) and messenger (mRNA) and is involved in their export from the nucleus whereas the alternative CBC with NCBP3 does not bind snRNA and associates only with mRNA thereby playing a role only in mRNA export. NCBP1/CBP80 is required for cell growth and viability. The sequence is that of Nuclear cap-binding protein subunit 1 (Ncbp1) from Mus musculus (Mouse).